A 717-amino-acid polypeptide reads, in one-letter code: Polyribonucleotide nucleotidyltransferase (717 aa).

Residues Asp-495 and Asp-501 each contribute to the Mg(2+) site. Residues 562–624 (PRMIMIQIPK…TALDSALSQI (63 aa)) enclose the KH domain. One can recognise an S1 motif domain in the interval 634-703 (GEVYEGKVKS…KTGKYRLSRK (70 aa)).

This sequence belongs to the polyribonucleotide nucleotidyltransferase family. It depends on Mg(2+) as a cofactor.

It localises to the cytoplasm. It catalyses the reaction RNA(n+1) + phosphate = RNA(n) + a ribonucleoside 5'-diphosphate. Involved in mRNA degradation. Catalyzes the phosphorolysis of single-stranded polyribonucleotides processively in the 3'- to 5'-direction. The chain is Polyribonucleotide nucleotidyltransferase from Cytophaga hutchinsonii (strain ATCC 33406 / DSM 1761 / CIP 103989 / NBRC 15051 / NCIMB 9469 / D465).